The primary structure comprises 577 residues: Methionine--tRNA ligase (577 aa).

The 'HIGH' region signature appears at 21–31 (PYANGPLHVGH). Residues cysteine 153, cysteine 156, cysteine 166, and cysteine 169 each contribute to the Zn(2+) site. The short motif at 355–359 (QMSTS) is the 'KMSKS' region element. Threonine 358 is a binding site for ATP.

This sequence belongs to the class-I aminoacyl-tRNA synthetase family. MetG type 1 subfamily. Monomer. Requires Zn(2+) as cofactor.

The protein resides in the cytoplasm. It catalyses the reaction tRNA(Met) + L-methionine + ATP = L-methionyl-tRNA(Met) + AMP + diphosphate. Is required not only for elongation of protein synthesis but also for the initiation of all mRNA translation through initiator tRNA(fMet) aminoacylation. The sequence is that of Methionine--tRNA ligase from Rubrobacter xylanophilus (strain DSM 9941 / JCM 11954 / NBRC 16129 / PRD-1).